Reading from the N-terminus, the 635-residue chain is Threonine--tRNA ligase (635 aa).

A TGS domain is found at 1–61 (MINISFPDGS…DNDCKLRILT (61 aa)). The tract at residues 242–533 (DHRKLGRELD…LIEEYAGRFP (292 aa)) is catalytic. Zn(2+) is bound by residues Cys-333, His-384, and His-510.

The protein belongs to the class-II aminoacyl-tRNA synthetase family. Homodimer. Requires Zn(2+) as cofactor.

It localises to the cytoplasm. It catalyses the reaction tRNA(Thr) + L-threonine + ATP = L-threonyl-tRNA(Thr) + AMP + diphosphate + H(+). Its function is as follows. Catalyzes the attachment of threonine to tRNA(Thr) in a two-step reaction: L-threonine is first activated by ATP to form Thr-AMP and then transferred to the acceptor end of tRNA(Thr). Also edits incorrectly charged L-seryl-tRNA(Thr). The chain is Threonine--tRNA ligase from Rickettsia conorii (strain ATCC VR-613 / Malish 7).